A 37-amino-acid polypeptide reads, in one-letter code: Chitinase-like protein (37 aa).

A disordered region spans residues 1 to 20 (VLLSVGGDADTESPEKKNLG). The 37-residue stretch at 1 to 37 (VLLSVGGDADTESPEKKNLGGVSIVDLSMDDFRGLLT) folds into the GH18 domain.

This sequence belongs to the glycosyl hydrolase 18 family. IDGF subfamily. In terms of processing, glycosylated.

It localises to the secreted. In terms of biological role, cooperates with insulin-like peptides to stimulate the proliferation, polarization and motility of imaginal disk cells. May act by stabilizing the binding of insulin-like peptides to its receptor through a simultaneous interaction with both molecules to form a multiprotein signaling complex. In Heliothis virescens (Tobacco budworm moth), this protein is Chitinase-like protein.